A 125-amino-acid polypeptide reads, in one-letter code: MPRYELALILKAMRRPETAAALKRTIESLMDRGAIVRNLESLGERALPYRISSHSQQHSRGGYFLVDFYAPTSAVENILEHLARDIDVVRPNIVKHPLTQEVKECDGIVPVPLEEKLYSTKRRKK.

The protein belongs to the bacterial ribosomal protein bS6 family. In terms of assembly, component of the mitochondrial ribosome small subunit (28S) which comprises a 12S rRNA and about 30 distinct proteins.

It localises to the mitochondrion. This is Small ribosomal subunit protein bS6m (Mrps6) from Mus musculus (Mouse).